The sequence spans 170 residues: ATP synthase subunit b (170 aa).

The helical transmembrane segment at 15–37 (GDILFQLLAMLILLALLKKYALG) threads the bilayer.

The protein belongs to the ATPase B chain family. In terms of assembly, F-type ATPases have 2 components, F(1) - the catalytic core - and F(0) - the membrane proton channel. F(1) has five subunits: alpha(3), beta(3), gamma(1), delta(1), epsilon(1). F(0) has three main subunits: a(1), b(2) and c(10-14). The alpha and beta chains form an alternating ring which encloses part of the gamma chain. F(1) is attached to F(0) by a central stalk formed by the gamma and epsilon chains, while a peripheral stalk is formed by the delta and b chains. The F(1)F(0) complex interacts with SpoIIIJ and YqjG; YqgA is found in the same complex.

It localises to the cell membrane. Functionally, f(1)F(0) ATP synthase produces ATP from ADP in the presence of a proton or sodium gradient. F-type ATPases consist of two structural domains, F(1) containing the extramembraneous catalytic core and F(0) containing the membrane proton channel, linked together by a central stalk and a peripheral stalk. During catalysis, ATP synthesis in the catalytic domain of F(1) is coupled via a rotary mechanism of the central stalk subunits to proton translocation. In terms of biological role, component of the F(0) channel, it forms part of the peripheral stalk, linking F(1) to F(0). In Bacillus subtilis (strain 168), this protein is ATP synthase subunit b.